The primary structure comprises 293 residues: 33 kDa chaperonin (293 aa).

Cystine bridges form between C229/C231 and C262/C265.

This sequence belongs to the HSP33 family. Under oxidizing conditions two disulfide bonds are formed involving the reactive cysteines. Under reducing conditions zinc is bound to the reactive cysteines and the protein is inactive.

It localises to the cytoplasm. Functionally, redox regulated molecular chaperone. Protects both thermally unfolding and oxidatively damaged proteins from irreversible aggregation. Plays an important role in the bacterial defense system toward oxidative stress. This is 33 kDa chaperonin from Methylobacillus flagellatus (strain ATCC 51484 / DSM 6875 / VKM B-1610 / KT).